Here is a 208-residue protein sequence, read N- to C-terminus: Protein-L-isoaspartate O-methyltransferase (208 aa).

Residue S59 is part of the active site.

This sequence belongs to the methyltransferase superfamily. L-isoaspartyl/D-aspartyl protein methyltransferase family.

It localises to the cytoplasm. It catalyses the reaction [protein]-L-isoaspartate + S-adenosyl-L-methionine = [protein]-L-isoaspartate alpha-methyl ester + S-adenosyl-L-homocysteine. Catalyzes the methyl esterification of L-isoaspartyl residues in peptides and proteins that result from spontaneous decomposition of normal L-aspartyl and L-asparaginyl residues. It plays a role in the repair and/or degradation of damaged proteins. The chain is Protein-L-isoaspartate O-methyltransferase from Salmonella paratyphi A (strain ATCC 9150 / SARB42).